Consider the following 425-residue polypeptide: Glutamyl-tRNA(Gln) amidotransferase subunit A (425 aa).

Residues Lys-29 and Ser-104 each act as charge relay system in the active site. The Acyl-ester intermediate role is filled by Ser-128.

Belongs to the amidase family. GatA subfamily. In terms of assembly, heterotrimer of A, B and C subunits.

The enzyme catalyses L-glutamyl-tRNA(Gln) + L-glutamine + ATP + H2O = L-glutaminyl-tRNA(Gln) + L-glutamate + ADP + phosphate + H(+). Functionally, allows the formation of correctly charged Gln-tRNA(Gln) through the transamidation of misacylated Glu-tRNA(Gln) in organisms which lack glutaminyl-tRNA synthetase. The reaction takes place in the presence of glutamine and ATP through an activated gamma-phospho-Glu-tRNA(Gln). The polypeptide is Glutamyl-tRNA(Gln) amidotransferase subunit A (Haloarcula marismortui (strain ATCC 43049 / DSM 3752 / JCM 8966 / VKM B-1809) (Halobacterium marismortui)).